Consider the following 226-residue polypeptide: LexA repressor (226 aa).

A DNA-binding region (H-T-H motif) is located at residues 42–62 (MREIGDAVGLASLSSVTHQLN). Residues serine 150 and lysine 187 each act as for autocatalytic cleavage activity in the active site.

This sequence belongs to the peptidase S24 family. Homodimer.

It carries out the reaction Hydrolysis of Ala-|-Gly bond in repressor LexA.. In terms of biological role, represses a number of genes involved in the response to DNA damage (SOS response), including recA and lexA. In the presence of single-stranded DNA, RecA interacts with LexA causing an autocatalytic cleavage which disrupts the DNA-binding part of LexA, leading to derepression of the SOS regulon and eventually DNA repair. The polypeptide is LexA repressor (Clavibacter sepedonicus (Clavibacter michiganensis subsp. sepedonicus)).